We begin with the raw amino-acid sequence, 357 residues long: NADH-quinone oxidoreductase subunit H (357 aa).

The next 8 membrane-spanning stretches (helical) occupy residues 20–40 (WLVV…ILCV), 92–112 (ILFI…WAVV), 127–147 (LLYV…AGWA), 165–185 (VSYE…SGSL), 206–226 (FLSW…ISAV), 268–288 (ILLS…PIDI), 294–314 (IPGW…FIWF), and 329–349 (LGWK…AIWM).

Belongs to the complex I subunit 1 family. In terms of assembly, NDH-1 is composed of 14 different subunits. Subunits NuoA, H, J, K, L, M, N constitute the membrane sector of the complex.

Its subcellular location is the cell inner membrane. It catalyses the reaction a quinone + NADH + 5 H(+)(in) = a quinol + NAD(+) + 4 H(+)(out). NDH-1 shuttles electrons from NADH, via FMN and iron-sulfur (Fe-S) centers, to quinones in the respiratory chain. The immediate electron acceptor for the enzyme in this species is believed to be ubiquinone. Couples the redox reaction to proton translocation (for every two electrons transferred, four hydrogen ions are translocated across the cytoplasmic membrane), and thus conserves the redox energy in a proton gradient. This subunit may bind ubiquinone. The protein is NADH-quinone oxidoreductase subunit H of Bordetella avium (strain 197N).